Reading from the N-terminus, the 237-residue chain is Purine nucleoside phosphorylase DeoD-type (237 aa).

H4 contributes to the a purine D-ribonucleoside binding site. Residues G20, R24, R43, and 87–90 (RVGT) contribute to the phosphate site. Residues 179-181 (EME) and 203-204 (SD) contribute to the a purine D-ribonucleoside site. The active-site Proton donor is the D204.

It belongs to the PNP/UDP phosphorylase family. As to quaternary structure, homohexamer; trimer of homodimers.

The enzyme catalyses a purine D-ribonucleoside + phosphate = a purine nucleobase + alpha-D-ribose 1-phosphate. It catalyses the reaction a purine 2'-deoxy-D-ribonucleoside + phosphate = a purine nucleobase + 2-deoxy-alpha-D-ribose 1-phosphate. Catalyzes the reversible phosphorolytic breakdown of the N-glycosidic bond in the beta-(deoxy)ribonucleoside molecules, with the formation of the corresponding free purine bases and pentose-1-phosphate. In Streptococcus uberis (strain ATCC BAA-854 / 0140J), this protein is Purine nucleoside phosphorylase DeoD-type.